The chain runs to 226 residues: Ribonuclease 3 (226 aa).

Residues 6–128 (INRLQRKLGY…LIGGVFLDSD (123 aa)) form the RNase III domain. Residue Glu41 participates in Mg(2+) binding. Asp45 is a catalytic residue. Positions 114 and 117 each coordinate Mg(2+). Residue Glu117 is part of the active site. Positions 155–225 (DPKTRLQEYL…AEQALKKLEL (71 aa)) constitute a DRBM domain.

This sequence belongs to the ribonuclease III family. In terms of assembly, homodimer. Mg(2+) is required as a cofactor.

It is found in the cytoplasm. It catalyses the reaction Endonucleolytic cleavage to 5'-phosphomonoester.. Its function is as follows. Digests double-stranded RNA. Involved in the processing of primary rRNA transcript to yield the immediate precursors to the large and small rRNAs (23S and 16S). Processes some mRNAs, and tRNAs when they are encoded in the rRNA operon. Processes pre-crRNA and tracrRNA of type II CRISPR loci if present in the organism. The protein is Ribonuclease 3 of Escherichia coli O139:H28 (strain E24377A / ETEC).